A 634-amino-acid polypeptide reads, in one-letter code: Ankyrin repeat and SOCS box protein 2 (634 aa).

Residues 26–45 (SEEELLQMAIEQSLADKTRG) form the UIM domain. A disordered region spans residues 36–82 (EQSLADKTRGPTPAEASASSQTNHQPGHFHPWTRSPSSPENPPARAP). ANK repeat units follow at residues 104-133 (AAMDPVLKAIKEGDEEALKIMIQDGKNLAE), 137-167 (EGWLPLHEAAYYGQLGCLKVLQQAYPGTIDQ), 171-200 (QEETALYLATCREHLDCLLSLLQAGAEPDI), 204-233 (SRETPLYKACERKNAEAVRILVRYNADANH), 237-266 (RGWTALHESVSRNDLEVMEILVSGGAKVEA), 270-299 (YSITPLFVAAQSGQLEALRFLAKHGADINT), 303-332 (DSASALYEASKNEHEDVVEFLLSQGADANK), 336-365 (DGLLPLHVASKKGNYRIVQMLLPVTSRTRV), 368-397 (SGISPLHLAAERNHDAVLEALLAARFDVNA), 410-439 (RRSSALYFAVVNNNVYATELLLLAGADPNR), 440-469 (DVISPLLVAIRHGCLRTMQLLLDHGANIDA), and 476-504 (TAFPATIMFAMKCLSLLKFLMDLGCDGEP). Position 371 is a phosphoserine (Ser371). In terms of domain architecture, SOCS box spans 580–634 (EDWAVIKEKAEPPRPLAHLCRLRVRKAIGKYRIKLLDTLPLPGRLIRYLKYENTQ).

It belongs to the ankyrin SOCS box (ASB) family. Component of a probable ECS E3 ubiquitin-protein ligase complex which contains CUL5, either RBX1 or RNF7/RBX2, Elongin BC complex (ELOB and ELOC) and ASB2. Interacts with SKP2. Through its interaction with SKP2, likely to bridge the formation of dimeric E3-ubiquitin-protein ligase complexes composed of an ECS complex and an SCF(SKP2) complex. Interacts with JAK2; the interaction targets JAK2 for Notch-mediated proteasomal degradation. Interacts with TCF3/E2A; the interaction is mediated by SKP2 and targets TCF3 for Notch-mediated proteasomal degradation. As to quaternary structure, interacts with DES. Post-translationally, monoubiquitinated. In terms of processing, not monoubiquitinated. Phosphorylation at Ser-371 is required for association with FLNA and subsequent FLNA degradation. In terms of tissue distribution, highest expression in muscle, heart and spleen. Highly expressed in cells of the first and second heart fields in the developing embryonic heart. At 9.5 dpc, robust expression predominantly in the left and right ventricles (RV) and to a lower extent in inflow and outflow tracts. At 10.5 and 11.5 dpc, expression is restricted to the myocardium with no expression observed in the endocardium. As to expression, not expressed in immature dendritic cells. Highly expressed in adult skeletal muscle with very low levels in adult bone marrow. Expressed in immature dendritic cells and in primary dendritic cells derived from the spleen. Highly expressed in adult bone marrow with negligible levels in adult skeletal muscle. Expressed at higher levels in T helper type 2 (Th2) cells than in regulatory T (Treg) cells, type 1 helper T (Th1) cells and T helper 17 (Th17) cells.

Its subcellular location is the cytoplasm. It localises to the cytoskeleton. The protein resides in the stress fiber. It is found in the myofibril. The protein localises to the sarcomere. Its subcellular location is the z line. It functions in the pathway protein modification; protein ubiquitination. Functionally, substrate-recognition component of a SCF-like ECS (Elongin-Cullin-SOCS-box protein) E3 ubiquitin-protein ligase complex which mediates the ubiquitination and subsequent proteasomal degradation of target proteins. Mediates Notch-induced ubiquitination and degradation of substrates including TCF3/E2A and JAK2. Required during embryonic heart development for complete heart looping. Required for cardiomyocyte differentiation. Specifically promotes the ubiquitination of SMAD9 and targets it for proteasomal degradation, leading to avoid excessive accumulation of SMAD9. Plays a role in the regulation of NK-cell migration by modulating protein levels of filamin A/FLNA via regulation of its ubiquitination and proteasome degradation. Involved in myogenic differentiation and targets filamin FLNB for proteasomal degradation but not filamin FLNA. Also targets DES for proteasomal degradation. Acts as a negative regulator of skeletal muscle mass. In terms of biological role, targets filamins FLNA and FLNB for proteasomal degradation. This leads to enhanced adhesion of hematopoietic cells to fibronectin. Required for FLNA degradation in immature cardiomyocytes which is necessary for actin cytoskeleton remodeling, leading to proper organization of myofibrils and function of mature cardiomyocytes. Required for degradation of FLNA and FLNB in immature dendritic cells (DC) which enhances immature DC migration by promoting DC podosome formation and DC-mediated degradation of the extracellular matrix. Does not promote proteasomal degradation of tyrosine-protein kinases JAK1 or JAK2 in hematopoietic cells. In Mus musculus (Mouse), this protein is Ankyrin repeat and SOCS box protein 2.